The sequence spans 327 residues: Aldo-keto reductase family 1 member A1 (327 aa).

NADP(+) is bound by residues Gly13–Gly22, Thr23, Trp24, and Asp47. Tyr52 acts as the Proton donor in catalysis. Residues Ser164, Asn165, Ser213, Leu215, Ser217, Lys265, Ser266, Val267, Thr268, Arg271, Gln274, and Asn275 each contribute to the NADP(+) site.

This sequence belongs to the aldo/keto reductase family.

The protein localises to the cytoplasm. The protein resides in the cytosol. It localises to the apical cell membrane. It carries out the reaction a primary alcohol + NADP(+) = an aldehyde + NADPH + H(+). The catalysed reaction is S-nitroso-CoA + NADPH + H(+) = sulfinamide-CoA + NADP(+). The enzyme catalyses S-nitrosoglutathione + NADPH + H(+) = S-(hydroxysulfenamide)glutathione + NADP(+). Functionally, catalyzes the NADPH-dependent reduction of a wide variety of carbonyl-containing compounds to their corresponding alcohols. Displays enzymatic activity towards endogenous metabolites such as aromatic and aliphatic aldehydes, ketones, monosaccharides and bile acids. Acts as an aldehyde-detoxification enzyme. Also acts as an inhibitor of protein S-nitrosylation by mediating degradation of S-nitroso-coenzyme A (S-nitroso-CoA), a cofactor required to S-nitrosylate proteins. Also acts as a S-nitroso-glutathione reductase by catalyzing the NADPH-dependent reduction of S-nitrosoglutathione. Displays no reductase activity towards retinoids. The protein is Aldo-keto reductase family 1 member A1 (akr1a1) of Xenopus tropicalis (Western clawed frog).